Reading from the N-terminus, the 355-residue chain is GPN-loop GTPase 1 (355 aa).

Residues 1-30 (MAEKAENLPSSSAEASEEPSPQTGPNVNQK) form a disordered region. Over residues 9 to 21 (PSSSAEASEEPSP) the composition is skewed to low complexity. 40-45 (GSGKTT) serves as a coordination point for GTP. Positions 97 to 99 (GPN) match the Gly-Pro-Asn (GPN)-loop; involved in dimer interface motif. 200–203 (NKAD) is a binding site for GTP. Residues 286-311 (EKVLAEKKLLDEEERKKRDEETLKGK) are a coiled coil.

Belongs to the GPN-loop GTPase family. In terms of assembly, heterodimer with GPN3. Binds to RNA polymerase II (RNAPII).

The protein localises to the cytoplasm. Its subcellular location is the nucleus. Small GTPase required for proper nuclear import of RNA polymerase II (RNAPII). May act at an RNAP assembly step prior to nuclear import. The protein is GPN-loop GTPase 1 of Caenorhabditis elegans.